Consider the following 281-residue polypeptide: Apolipoprotein Eb (281 aa).

Positions 1–18 (MRSLVVFFALAVLTGCQA) are cleaved as a signal peptide. Positions 19-24 (RSLFQA) are excised as a propeptide. The segment at 34 to 66 (MVDRFWQYVSELNTQTDGMVQNIKGSQLSRELD) is 3 X approximate tandem repeats. 9 repeat units span residues 67 to 88 (TLIT…TQMT), 89 to 110 (PYAS…GKLQ), 111 to 132 (TDMT…TMME), 133 to 154 (QNAD…KRLN), 155 to 176 (KDTE…SRAS), 177 to 199 (QNAD…GATQ), 200 to 227 (KLGA…GALK), 228 to 249 (EKLE…DELT), and 254 to 281 (PYSQ…PTQA). The segment at 67–281 (TLITDTMAEL…EATAALPTQA (215 aa)) is 9 X 22 AA approximate tandem repeats.

It belongs to the apolipoprotein A1/A4/E family. Homotetramer.

The protein resides in the secreted. It is found in the extracellular space. The protein localises to the extracellular matrix. In terms of biological role, APOE is an apolipoprotein, a protein associating with lipid particles, that mainly functions in lipoprotein-mediated lipid transport between organs via the plasma and interstitial fluids. APOE is a core component of plasma lipoproteins and is involved in their production, conversion and clearance. Apolipoproteins are amphipathic molecules that interact both with lipids of the lipoprotein particle core and the aqueous environment of the plasma. In Danio rerio (Zebrafish), this protein is Apolipoprotein Eb (apoeb).